The chain runs to 126 residues: uncharacterized protein (126 aa).

The helical transmembrane segment at 55–77 threads the bilayer; the sequence is MLLINSNLVLSGLLLFIDVYRAA.

The protein resides in the membrane. This is an uncharacterized protein from Dictyostelium discoideum (Social amoeba).